Reading from the N-terminus, the 128-residue chain is Large ribosomal subunit protein bL12 (128 aa).

It belongs to the bacterial ribosomal protein bL12 family. As to quaternary structure, homodimer. Part of the ribosomal stalk of the 50S ribosomal subunit. Forms a multimeric L10(L12)X complex, where L10 forms an elongated spine to which 2 to 4 L12 dimers bind in a sequential fashion. Binds GTP-bound translation factors.

Forms part of the ribosomal stalk which helps the ribosome interact with GTP-bound translation factors. Is thus essential for accurate translation. The sequence is that of Large ribosomal subunit protein bL12 from Kosmotoga olearia (strain ATCC BAA-1733 / DSM 21960 / TBF 19.5.1).